The primary structure comprises 221 residues: Eukaryotic translation initiation factor 4E-2 (221 aa).

Residues Met1–Asp20 are compositionally biased toward basic and acidic residues. Residues Met1–Ser36 form a disordered region. Positions Arg21–Asp33 are enriched in acidic residues. 2 EIF4G-binding regions span residues His46–Glu49 and Phe56–His92. MRNA is bound by residues Lys64–Gly69, Lys96, and Trp114–Glu115. A disulfide bridge connects residues Cys119 and Cys157. The interval Tyr140–Gln149 is EIF4G-binding. Residues Arg164–Lys169 and Lys209–Arg213 contribute to the mRNA site.

It belongs to the eukaryotic initiation factor 4E family. EIF4F is a multi-subunit complex, the composition of which varies with external and internal environmental conditions. It is composed of at least EIF4A, EIF4E and EIF4G. EIF4E is also known to interact with other partners. In higher plants two isoforms of EIF4F have been identified, named isoform EIF4F and isoform EIF(iso)4F. Isoform EIF4F has subunits p220 and p26, whereas isoform EIF(iso)4F has subunits p82 and p28. In terms of assembly, (Microbial infection) Interacts with potyvirus viral genome-linked protein (VPg) in the nucleus; mostly potato virus Y (PVY-LYE84) and tobacco etch virus (TEV-HAT) VPg, but not with PVY-LYE90 and pepper mottle virus (PepMoV) VPg; these interactions are possible in susceptible hosts but impaired in resistant plants. In terms of processing, according to the redox status, the Cys-119-Cys-157 disulfide bridge may have a role in regulating protein function by affecting its ability to bind capped mRNA.

The protein localises to the nucleus. It localises to the cytoplasm. Its function is as follows. Component of the protein complex eIF4F, which is involved in the recognition of the mRNA cap, ATP-dependent unwinding of 5'-terminal secondary structure and recruitment of mRNA to the ribosome. Recognizes and binds the 7-methylguanosine-containing mRNA cap during an early step in the initiation of protein synthesis and facilitates ribosome binding by inducing the unwinding of the mRNAs secondary structures. Key component of recessive resistance to potyviruses. Functionally, (Microbial infection) Susceptibility host factor required for viral infection (e.g. potato virus Y (PVY) and tobacco etch virus (TEV)) by recruiting viral RNAs to the host ribosomal complex via an interaction with viral genome-linked protein (VPg). The sequence is that of Eukaryotic translation initiation factor 4E-2 from Solanum lycopersicum (Tomato).